Consider the following 90-residue polypeptide: Probable Fe(2+)-trafficking protein (90 aa).

It belongs to the Fe(2+)-trafficking protein family.

In terms of biological role, could be a mediator in iron transactions between iron acquisition and iron-requiring processes, such as synthesis and/or repair of Fe-S clusters in biosynthetic enzymes. The sequence is that of Probable Fe(2+)-trafficking protein from Bordetella bronchiseptica (strain ATCC BAA-588 / NCTC 13252 / RB50) (Alcaligenes bronchisepticus).